We begin with the raw amino-acid sequence, 39 residues long: Cytochrome b6-f complex subunit 5 (39 aa).

Residues 5–25 (LLCGIVLGLVPVTLLGLFVSA) form a helical membrane-spanning segment.

Belongs to the PetG family. The 4 large subunits of the cytochrome b6-f complex are cytochrome b6, subunit IV (17 kDa polypeptide, PetD), cytochrome f and the Rieske protein, while the 4 small subunits are PetG, PetL, PetM and PetN. The complex functions as a dimer.

The protein resides in the cellular thylakoid membrane. In terms of biological role, component of the cytochrome b6-f complex, which mediates electron transfer between photosystem II (PSII) and photosystem I (PSI), cyclic electron flow around PSI, and state transitions. PetG is required for either the stability or assembly of the cytochrome b6-f complex. The sequence is that of Cytochrome b6-f complex subunit 5 from Prochlorococcus marinus (strain NATL1A).